The following is a 706-amino-acid chain: Polyribonucleotide nucleotidyltransferase (706 aa).

Positions 488 and 494 each coordinate Mg(2+). In terms of domain architecture, KH spans 555–614; sequence PRLFTMKINPDKIRDVIGKGGSVIRALTEETGTQINIDEDGTITIASADPAKAEEAKRRI. Residues 624 to 692 enclose the S1 motif domain; the sequence is GKIYEGPITK…EKGRIKLSMK (69 aa).

It belongs to the polyribonucleotide nucleotidyltransferase family. The cofactor is Mg(2+).

The protein resides in the cytoplasm. It catalyses the reaction RNA(n+1) + phosphate = RNA(n) + a ribonucleoside 5'-diphosphate. Functionally, involved in mRNA degradation. Catalyzes the phosphorolysis of single-stranded polyribonucleotides processively in the 3'- to 5'-direction. In Albidiferax ferrireducens (strain ATCC BAA-621 / DSM 15236 / T118) (Rhodoferax ferrireducens), this protein is Polyribonucleotide nucleotidyltransferase.